Consider the following 190-residue polypeptide: Translation machinery-associated protein 22 (190 aa).

The segment at 63-83 (LNVSGTKDSNAEEQPAKLTKE) is disordered. Residues 99 to 170 (VLIKTIERTK…DIFDFILEKF (72 aa)) enclose the SUI1 domain.

The protein belongs to the DENR family. As to quaternary structure, interacts with the 40S ribosomal subunit.

The protein resides in the cytoplasm. This is Translation machinery-associated protein 22 (tma22) from Schizosaccharomyces pombe (strain 972 / ATCC 24843) (Fission yeast).